Here is a 1219-residue protein sequence, read N- to C-terminus: Myosin-5 (1219 aa).

The segment covering 1–12 (MAILKRGARKKV) has biased composition (basic residues). Positions 1–20 (MAILKRGARKKVHQEPAKRS) are disordered. One can recognise a Myosin motor domain in the interval 36–715 (VGVSDLTLLS…TLFALEHMRD (680 aa)). 129-136 (GESGAGKT) is an ATP binding site. At serine 357 the chain carries Phosphoserine. Tyrosine 359 is modified (phosphotyrosine). The segment at 404–486 (SIGILDIYGF…PGIFAAMNDS (83 aa)) is actin-binding. 2 consecutive IQ domains span residues 719–739 (HNMA…RIDA) and 740–765 (ATKI…YGTK). A TH1 domain is found at 771-961 (KERRSMSLLG…TISVRRGNPP (191 aa)). Residue serine 777 is modified to Phosphoserine. Residues 951–964 (STISVRRGNPPNSQ) are compositionally biased toward polar residues. Disordered stretches follow at residues 951–1106 (STIS…SELP) and 1139–1167 (TAYM…VLNS). A compositionally biased stretch (low complexity) spans 974–984 (SISSGYHASSS). Serine 992 is subject to Phosphoserine. Positions 1030–1041 (NPASTLTASQSN) are enriched in polar residues. Residues 1048–1063 (TAATRATPAATPAAAA) are compositionally biased toward low complexity. Pro residues predominate over residues 1072–1083 (IPPPPPPPPPSS). The SH3 domain maps to 1085-1147 (PKEPMFEAAY…PTAYMKPHSG (63 aa)). Residue serine 1205 is modified to Phosphoserine.

It belongs to the TRAFAC class myosin-kinesin ATPase superfamily. Myosin family. As to quaternary structure, interacts (via myosin motor domain) with SHE4; this interaction is important for proper localization and may regulate the interaction of the motor domain with actin. Interacts (via SH3 domain) with VRP1; this interaction is required for localization to sites of polarized growth and may regulate the interaction of the tail domain with actin. Interacts (via SH3 domain) with PAN1; this interaction is important for late stages of endocytopsis. Interacts (via SH3 domain) with BBC1 and LAS17. Interacts (via C-terminal acidic tail) with ARC19 and ARC40; ARC19 and ARC40 are Arp2/3 complex subunits. Interacts with BZZ1, PKH1, PKH2, YPK1 and YPK2. Phosphorylation of the TEDS site (Ser-357) is required for the polarization of the actin cytoskeleton and for ligand-induced, but not for constitutive internalization of STE2. Phosphorylation probably activates the myosin-I ATPase activity. Ser-357 is phosphorylated by YPK2 in vitro.

It localises to the cytoplasm. The protein resides in the cytoskeleton. The protein localises to the actin patch. Its function is as follows. One of two redundant type-I myosins implicated in the organization of the actin cytoskeleton. Required for proper actin cytoskeleton polarization and for the internalization step in endocytosis. At the cell cortex, assembles in patch-like structures together with proteins from the actin-polymerizing machinery and promotes actin assembly. Functions redundantly with LAS17 as actin nucleation-promoting factor (NPF) for the Arp2/3 complex. Motor domain phosphorylation by PAK kinases CLA4 and STE20 promotes CDC42-regulated actin assembly. Functions together with the NPF PAN1 in late stages of endocytosis. Motor domain phosphorylation by PDK1 kinases PKH1 and PKH2, and by SGK kinases YPK1 and YPK2, promotes ligand-induced, but not constitutive endocytosis of the G protein-coupled receptor STE2. This Saccharomyces cerevisiae (strain YJM789) (Baker's yeast) protein is Myosin-5 (MYO5).